The sequence spans 99 residues: Cell division protein FtsB (99 aa).

At 1–3 the chain is on the cytoplasmic side; it reads MKF. The chain crosses the membrane as a helical span at residues 4-21; that stretch reads FVIALIVLLGLLQYRLWS. Topologically, residues 22 to 99 are periplasmic; that stretch reads GDNSLPEYFV…GDRSVSSPSQ (78 aa). Positions 31–73 form a coiled coil; the sequence is VLQKQIAAQQDGNAKLNERNQVLKEEIIDLKSGTEAIEERARN.

This sequence belongs to the FtsB family. In terms of assembly, part of a complex composed of FtsB, FtsL and FtsQ.

The protein resides in the cell inner membrane. Essential cell division protein. May link together the upstream cell division proteins, which are predominantly cytoplasmic, with the downstream cell division proteins, which are predominantly periplasmic. The sequence is that of Cell division protein FtsB from Shewanella sp. (strain MR-4).